Here is a 20-residue protein sequence, read N- to C-terminus: Endo-1,6-beta-glucanase (20 aa).

This sequence belongs to the glycosyl hydrolase 5 (cellulase A) family.

Its subcellular location is the secreted. It is found in the extracellular space. The enzyme catalyses Random hydrolysis of (1-&gt;6)-linkages in (1-&gt;6)-beta-D-glucans.. Functionally, endo-1,6-beta-glucanase that has highest activity against the beta-1,6-glucan pustulan. Also active against the beta-1,6-glucan lutean. Lower activity against laminarin (beta-1,3-glucan with beta-1,6-branches). Little or no activity against gentiobiose, yeast glucan, lichenin, scleroglucan, curdlan, barley glucan, CM cellulose, HE cellulose, pachyman and pullulan. The protein is Endo-1,6-beta-glucanase of Acremonium sp.